The chain runs to 32 residues: Zinc metalloproteinase/disintegrin-like CdtV1 (32 aa).

2 disulfides stabilise this stretch: Cys-5–Cys-14 and Cys-7–Cys-15.

The protein belongs to the venom metalloproteinase (M12B) family. P-II subfamily. P-IIa sub-subfamily. Monomer. Expressed by the venom gland.

It localises to the secreted. In terms of biological role, snake venom metalloproteinase that impairs hemostasis in the envenomed animal. This is Zinc metalloproteinase/disintegrin-like CdtV1 from Crotalus durissus terrificus (South American rattlesnake).